We begin with the raw amino-acid sequence, 505 residues long: MRDPLTDCSYNKVYKNLKEFSQNGEDFCKQITSILQQRANLEINYAKGLQKLATKLSKTLQSAKKNCLVSAWAWVSEGMKSAGDLHQKLGKAIELEAIKPAHQVLSAHEKKRKSLENEVEKTANLVISNWNQQIKAKKKLMVSTKKHEALFHLVESSKQITTEKEKQKLLNKLKKSTEKLSKEDENYYQKNVASCSTRLKWENTLENCFQSILELEKERIQLLCNNLNQYSQHISVFGQTLTTCHTQIHCAISKIDIEKDIQALMEETTVSSTENKSEFLLTDYFEEDPKNAMSKERQTSSIKSKLLRLQKDIEKASRDQEGLERMLRAYSSHSSFSDSESKKSTAALMDENSLKLDLLQANSYKLSSVLAELEQRPQPNHPCSNSIFKWKEKQTHSSVKISRPVLMKRLENVVNRASSDGQRIPSPSSTASGVTQLGNGLCKALYPFQARQDDELDLEKGDIVTIHKKKDEGWWFGSLKGKKGHFPAAYVEELPLNAGDTASQA.

The F-BAR domain maps to 1–260; sequence MRDPLTDCSY…AISKIDIEKD (260 aa). Coiled-coil stretches lie at residues 101–128, 160–222, and 295–332; these read AHQV…LVIS, ITTE…RIQL, and KERQ…AYSS. Residue Ser114 is modified to Phosphoserine. Positions 292 to 372 constitute an REM-1 domain; that stretch reads AMSKERQTSS…SYKLSSVLAE (81 aa). The region spanning 437 to 496 is the SH3 domain; sequence LGNGLCKALYPFQARQDDELDLEKGDIVTIHKKKDEGWWFGSLKGKKGHFPAAYVEELPL. Ser478 carries the post-translational modification Phosphoserine.

As to quaternary structure, homotrimer. Interacts with DAB2. Interacts with NOS3, DNM2, WASL and CAV1. Interacts (via SH3 domain) with DNM2; this interaction allows the recruitment of NOS3 to dynamin-positive structures. As to expression, present in pulmonary arterial endothelial cells (at protein level).

The protein localises to the cell membrane. It is found in the cytoplasmic vesicle. Its subcellular location is the cytoplasm. It localises to the cytoskeleton. Multivalent adapter protein which may decrease NOS3 activity by inducing its translocation away from the plasma membrane. This Bos taurus (Bovine) protein is Nostrin.